A 154-amino-acid chain; its full sequence is Small ribosomal subunit protein uS7 (154 aa).

Belongs to the universal ribosomal protein uS7 family.

In Nicotiana plumbaginifolia (Leadwort-leaved tobacco), this protein is Small ribosomal subunit protein uS7 (RPS5).